The chain runs to 324 residues: Probable RuBisCO transcriptional regulator (324 aa).

The HTH lysR-type domain maps to 8–65 (FSLEQLRILKAIATEGSFKKAAESLYMTQPAISLQIQTLEKKLNIALFDRSGRRALMT). The segment at residues 25 to 44 (FKKAAESLYMTQPAISLQIQ) is a DNA-binding region (H-T-H motif).

Belongs to the LysR transcriptional regulatory family.

It is found in the plastid. The protein resides in the cyanelle. Its function is as follows. Trans-acting transcriptional regulator of RuBisCO genes (rbcL and rbcS) expression. In Cyanophora paradoxa, this protein is Probable RuBisCO transcriptional regulator (rbcR).